Reading from the N-terminus, the 459-residue chain is Cysteine--tRNA ligase (459 aa).

C28 lines the Zn(2+) pocket. Positions V30 to H40 match the 'HIGH' region motif. 3 residues coordinate Zn(2+): C209, H234, and E238. The short motif at K266–S270 is the 'KMSKS' region element. K269 contacts ATP.

It belongs to the class-I aminoacyl-tRNA synthetase family. In terms of assembly, monomer. Requires Zn(2+) as cofactor.

It is found in the cytoplasm. The catalysed reaction is tRNA(Cys) + L-cysteine + ATP = L-cysteinyl-tRNA(Cys) + AMP + diphosphate. In Shewanella oneidensis (strain ATCC 700550 / JCM 31522 / CIP 106686 / LMG 19005 / NCIMB 14063 / MR-1), this protein is Cysteine--tRNA ligase.